Here is a 249-residue protein sequence, read N- to C-terminus: Metallo-beta-lactamase type 2 (249 aa).

An N-terminal signal peptide occupies residues 1-22 (MLKKIKISLILALGLTSLQAFG). Residues H98, H100, D102, H161, and C180 each contribute to the Zn(2+) site. Position 183 (K183) interacts with substrate. Residue H222 participates in Zn(2+) binding.

It belongs to the metallo-beta-lactamase superfamily. Class-B beta-lactamase family. As to quaternary structure, monomer. It depends on Zn(2+) as a cofactor.

Its subcellular location is the periplasm. The enzyme catalyses a beta-lactam + H2O = a substituted beta-amino acid. Inhibited by chelating agents such as EDTA, 1-10 phenanthroline and pyridine-2,6-dicarboxylic acid. Confers resistance to the different beta-lactams antibiotics (penicillin, cephalosporin and carbapenem) via the hydrolysis of the beta-lactam ring. This is Metallo-beta-lactamase type 2 (blaB1) from Elizabethkingia meningoseptica (Chryseobacterium meningosepticum).